The sequence spans 96 residues: Protein Vpr (96 aa).

Residues 1–42 are homooligomerization; that stretch reads MEQAPEDQGPQREPYNEWTLELLEELKNEAVRHFPRPWLHGL. At Ser79 the chain carries Phosphoserine; by host.

Belongs to the HIV-1 VPR protein family. Homooligomer, may form homodimer. Interacts with p6-gag region of the Pr55 Gag precursor protein through a (Leu-X-X)4 motif near the C-terminus of the P6gag protein. Interacts with host UNG. May interact with host RAD23A/HHR23A. Interacts with host VPRBP/DCAF1, leading to hijack the CUL4A-RBX1-DDB1-DCAF1/VPRBP complex, mediating ubiquitination of host proteins such as TERT and ZGPAT and arrest of the cell cycle in G2 phase. Post-translationally, phosphorylated on several residues by host. These phosphorylations regulate VPR activity for the nuclear import of the HIV-1 pre-integration complex.

The protein resides in the virion. It localises to the host nucleus. It is found in the host extracellular space. Functionally, during virus replication, may deplete host UNG protein, and incude G2-M cell cycle arrest. Acts by targeting specific host proteins for degradation by the 26S proteasome, through association with the cellular CUL4A-DDB1 E3 ligase complex by direct interaction with host VPRPB/DCAF-1. Cell cycle arrest reportedly occurs within hours of infection and is not blocked by antiviral agents, suggesting that it is initiated by the VPR carried into the virion. Additionally, VPR induces apoptosis in a cell cycle dependent manner suggesting that these two effects are mechanistically linked. Detected in the serum and cerebrospinal fluid of AIDS patient, VPR may also induce cell death to bystander cells. In terms of biological role, during virus entry, plays a role in the transport of the viral pre-integration (PIC) complex to the host nucleus. This function is crucial for viral infection of non-dividing macrophages. May act directly at the nuclear pore complex, by binding nucleoporins phenylalanine-glycine (FG)-repeat regions. This Human immunodeficiency virus type 1 group M subtype G (isolate 92NG083) (HIV-1) protein is Protein Vpr.